The sequence spans 375 residues: MGSSILTNRSAMTALQTLRNIDNNLDKSKDRISTGLRIGSASDNTAYWSISSMMKHDSNTMSAVVDAINLGREQVNVAATAVNLTKESLDDIQKSMVSAREKSDDDIMKIQDSIKGNMQNISNAIQSAAFGGKNILSNGGEKVGIAAGYRREGSAVYVDMIEVGGAELNFGVMGPDGTIDMTQGILKGVFGKSDKDIDAGIKTFTEAADKQKGLEDALAKAEAAVAANPNDEAAKTALEEAKKAVEDNKEDWTKAQSDFKVVADSMTLNDFVQMQGVGGLPSVAQSIILNSVQKTVRHAVDVTLTAGSKIGSAVNQVDSQLNFVKRLLDNIEAGIGALVDADMNAESAKLSALQVQQQLGIPRLFLLQIRAARIF.

Belongs to the bacterial flagellin family.

It is found in the secreted. The protein localises to the bacterial flagellum. Functionally, flagellin is the subunit protein which polymerizes to form the filaments of bacterial flagella. Flagella are an important component in the invasiveness of B.bacilliformis. The protein is Flagellin of Bartonella bacilliformis.